The primary structure comprises 437 residues: Repulsive guidance molecule B (437 aa).

Positions 1-45 are cleaved as a signal peptide; that stretch reads MGLRAAPSSAAAAAAEVEQRRSPGLCPPPLELLLLLLFSLGLLHA. N120 carries N-linked (GlcNAc...) asparagine glycosylation. Over residues 121-133 the composition is skewed to polar residues; it reads CSKDGPTSSTNPE. A disordered region spans residues 121 to 153; it reads CSKDGPTSSTNPEVTHDPCNYHSHAGAREHRRG. 2 cysteine pairs are disulfide-bonded: C139–C226 and C163–C312. N383 is a glycosylation site (N-linked (GlcNAc...) asparagine). N413 carries the GPI-anchor amidated asparagine lipid modification. Residues 414 to 437 constitute a propeptide, removed in mature form; it reads GTPRGGSDLSVSLGLTCLILIVFL.

This sequence belongs to the repulsive guidance molecule (RGM) family. In terms of assembly, homooligomer. Interacts with DRGX. Interacts with BMP2 and BMP4. Interacts with the BMP type I receptors ACVR1, BMPR1A and BMPR1B and with the BMP type II receptor ACVR2B. The functional complex with its receptor NEO1/neogenin appears to be a heterotetramer with a 2:2 stoichiometry, RGM molecules acting as staples that bring two NEO1 receptors together without interacting themselves, this arrangement leads to activation of downstream signaling via RhoA. In terms of processing, GPI-anchored. Post-translationally, autocatalytically cleaved at low pH; the two chains remain linked via two disulfide bonds.

Its subcellular location is the cell membrane. The protein localises to the membrane raft. Member of the repulsive guidance molecule (RGM) family that contributes to the patterning of the developing nervous system. Acts as a bone morphogenetic protein (BMP) coreceptor that potentiates BMP signaling. Promotes neuronal adhesion. May inhibit neurite outgrowth. This chain is Repulsive guidance molecule B, found in Homo sapiens (Human).